A 283-amino-acid polypeptide reads, in one-letter code: MSHASPYENNPLLANLTLGQKTDYIAEYSPQLLQPVPRQLNRDALNLAGNLPFHGEDLWTLYEISWLNNKGKPVVAIGEARIDAGSINLIESKSFKLYLNSFNQTRFADLATVRHTLEQDLSKCAEGAIKVALYPLSEAAHHIGTFPGECIDDLDIVIDEYHFSSDWLEQAGDNHTIVEETLHSHLLKSNCLVTGQPDWGSVVIHYKGPRINREKMLRYLISFRQHNEFHEQCVERIFVDLQRHCQPEKLTVYARYTRRGGLDINPFRSNWETAPANMRLIRQ.

Isoleucine 90 to serine 92 provides a ligand contact to substrate. Serine 92–lysine 93 serves as a coordination point for NADPH. Cysteine 191 (thioimide intermediate) is an active-site residue. Aspartate 198 functions as the Proton donor in the catalytic mechanism. Substrate is bound at residue histidine 230–glutamate 231. Residue arginine 259–glycine 260 participates in NADPH binding.

It belongs to the GTP cyclohydrolase I family. QueF type 2 subfamily. As to quaternary structure, homodimer.

The protein localises to the cytoplasm. It catalyses the reaction 7-aminomethyl-7-carbaguanine + 2 NADP(+) = 7-cyano-7-deazaguanine + 2 NADPH + 3 H(+). The protein operates within tRNA modification; tRNA-queuosine biosynthesis. Its function is as follows. Catalyzes the NADPH-dependent reduction of 7-cyano-7-deazaguanine (preQ0) to 7-aminomethyl-7-deazaguanine (preQ1). In Tolumonas auensis (strain DSM 9187 / NBRC 110442 / TA 4), this protein is NADPH-dependent 7-cyano-7-deazaguanine reductase.